We begin with the raw amino-acid sequence, 72 residues long: Translation initiation factor IF-1 2 (72 aa).

An S1-like domain is found at 1 to 72 (MAKEDTIQMQ…SRARIVFRAK (72 aa)).

Belongs to the IF-1 family. In terms of assembly, component of the 30S ribosomal translation pre-initiation complex which assembles on the 30S ribosome in the order IF-2 and IF-3, IF-1 and N-formylmethionyl-tRNA(fMet); mRNA recruitment can occur at any time during PIC assembly.

It localises to the cytoplasm. In terms of biological role, one of the essential components for the initiation of protein synthesis. Stabilizes the binding of IF-2 and IF-3 on the 30S subunit to which N-formylmethionyl-tRNA(fMet) subsequently binds. Helps modulate mRNA selection, yielding the 30S pre-initiation complex (PIC). Upon addition of the 50S ribosomal subunit IF-1, IF-2 and IF-3 are released leaving the mature 70S translation initiation complex. This chain is Translation initiation factor IF-1 2, found in Chromobacterium violaceum (strain ATCC 12472 / DSM 30191 / JCM 1249 / CCUG 213 / NBRC 12614 / NCIMB 9131 / NCTC 9757 / MK).